We begin with the raw amino-acid sequence, 295 residues long: Glutamyl-Q tRNA(Asp) synthetase (295 aa).

L-glutamate-binding positions include Arg5 to Ser9 and Glu41. The short motif at Pro8–Ser18 is the 'HIGH' region element. Residues Cys97, Cys99, Tyr117, and Cys121 each contribute to the Zn(2+) site. Tyr178 and Arg196 together coordinate L-glutamate. Residues Lys234–Gln238 carry the 'KMSKS' region motif. Lys237 is an ATP binding site.

This sequence belongs to the class-I aminoacyl-tRNA synthetase family. GluQ subfamily. Zn(2+) serves as cofactor.

Functionally, catalyzes the tRNA-independent activation of glutamate in presence of ATP and the subsequent transfer of glutamate onto a tRNA(Asp). Glutamate is transferred on the 2-amino-5-(4,5-dihydroxy-2-cyclopenten-1-yl) moiety of the queuosine in the wobble position of the QUC anticodon. This chain is Glutamyl-Q tRNA(Asp) synthetase, found in Neisseria meningitidis serogroup C (strain 053442).